We begin with the raw amino-acid sequence, 1053 residues long: CRISPR-associated endonuclease Cas9 (1053 aa).

Residues 1–41 are ruvC-I; sequence MKRNYILGLDIGITSVGYGIIDYETRDVIDAGVRLFKEANV. Residue Asp10 is the For RuvC-like nuclease domain of the active site. Residue Asp10 participates in Mg(2+) binding. Residues 41–426 form a recognition lobe region; sequence VENNEGRRSK…IFNRLKLVPK (386 aa). The ruvC-II stretch occupies residues 435–481; it reads EIPTTLVDDFILSPVVKRSFIQSIKVINAIIKKYGLPNDIIIELARE. Mg(2+)-binding residues include Glu477 and Glu481. An HNH Cas9-type domain is found at 480–646; it reads REKNSKDAQK…VQKDFINRNL (167 aa). The active-site Proton acceptor for HNH nuclease domain is the His557. Positions 650-775 are ruvC-III; that stretch reads RYATRGLMNL…FKDYKYSHRV (126 aa). His701 serves as a coordination point for Mg(2+). RNA is bound at residue Tyr789. PAM substrate-binding regions lie at residues 882 to 889 and 985 to 993; these read YYGNKLNA and NNDLLNRIE. The tract at residues 910 to 1053 is PAM-interacting domain (PI); it reads KPYRFDVYLD…KKHPQIIKKG (144 aa).

This sequence belongs to the CRISPR-associated Cas9 family. Subtype II-A subfamily. In terms of assembly, monomer. Binds crRNA and tracrRNA. Mg(2+) serves as cofactor.

CRISPR (clustered regularly interspaced short palindromic repeat) is an adaptive immune system that provides protection against mobile genetic elements (viruses, transposable elements and conjugative plasmids). CRISPR clusters contain spacers, sequences complementary to antecedent mobile elements, and target invading nucleic acids. CRISPR clusters are transcribed and processed into CRISPR RNA (crRNA). In type II CRISPR systems correct processing of pre-crRNA requires a trans-encoded small RNA (tracrRNA), endogenous ribonuclease 3 (rnc) and this protein. The tracrRNA serves as a guide for ribonuclease 3-aided processing of pre-crRNA. Subsequently Cas9/crRNA/tracrRNA endonucleolytically cleaves linear or circular dsDNA target complementary to the spacer; Cas9 is inactive in the absence of the 2 guide RNAs (gRNA). Cas9 recognizes the protospacer adjacent motif (PAM) in the CRISPR repeat sequences to help distinguish self versus nonself, as targets within the bacterial CRISPR locus do not have PAMs. PAM recognition is also required for catalytic activity. This Staphylococcus aureus protein is CRISPR-associated endonuclease Cas9.